A 479-amino-acid polypeptide reads, in one-letter code: Ribosomal RNA small subunit methyltransferase F (479 aa).

S-adenosyl-L-methionine contacts are provided by residues 125 to 131 (AAAPGSK), Glu149, Asp176, and Asp194. The active-site Nucleophile is Cys247.

This sequence belongs to the class I-like SAM-binding methyltransferase superfamily. RsmB/NOP family.

It is found in the cytoplasm. It carries out the reaction cytidine(1407) in 16S rRNA + S-adenosyl-L-methionine = 5-methylcytidine(1407) in 16S rRNA + S-adenosyl-L-homocysteine + H(+). In terms of biological role, specifically methylates the cytosine at position 1407 (m5C1407) of 16S rRNA. In Escherichia coli O17:K52:H18 (strain UMN026 / ExPEC), this protein is Ribosomal RNA small subunit methyltransferase F.